A 308-amino-acid chain; its full sequence is Putative lipid kinase SH2167 (308 aa).

The DAGKc domain maps to 1-139; that stretch reads MGQKFNHGVL…YDVMKVNGTY (139 aa). Residues serine 44, 74-80, and threonine 101 contribute to the ATP site; that span reads GDGTVNE. Mg(2+) is bound by residues serine 220, aspartate 223, and lysine 225. The active-site Proton acceptor is the glutamate 281.

Belongs to the diacylglycerol/lipid kinase family. Mg(2+) is required as a cofactor.

Its function is as follows. May catalyze the ATP-dependent phosphorylation of lipids other than diacylglycerol (DAG). The polypeptide is Putative lipid kinase SH2167 (Staphylococcus haemolyticus (strain JCSC1435)).